The primary structure comprises 397 residues: Phosphoglycerate kinase (397 aa).

Residues 22 to 24 (DLN), Arg-37, 60 to 63 (HFGR), Arg-119, and Arg-152 contribute to the substrate site. ATP is bound by residues Lys-202, Glu-324, and 354–357 (GGDT).

This sequence belongs to the phosphoglycerate kinase family. As to quaternary structure, monomer.

It is found in the cytoplasm. It catalyses the reaction (2R)-3-phosphoglycerate + ATP = (2R)-3-phospho-glyceroyl phosphate + ADP. The protein operates within carbohydrate degradation; glycolysis; pyruvate from D-glyceraldehyde 3-phosphate: step 2/5. This Zymomonas mobilis subsp. mobilis (strain ATCC 31821 / ZM4 / CP4) protein is Phosphoglycerate kinase (pgk).